A 151-amino-acid chain; its full sequence is UPF0756 membrane protein Aflv_0503 (151 aa).

Helical transmembrane passes span 4–24 (FIFL…SLII), 52–72 (LGVT…KIGF), 85–105 (WIAM…VALL), and 115–135 (LVLG…GPLI).

Belongs to the UPF0756 family.

The protein resides in the cell membrane. This is UPF0756 membrane protein Aflv_0503 from Anoxybacillus flavithermus (strain DSM 21510 / WK1).